We begin with the raw amino-acid sequence, 214 residues long: Adenylate kinase (214 aa).

ATP is bound at residue 10–15 (GAGKGT). Residues 30–59 (STGDMLRAAIKAGTELGKQAKSVIDAGQLV) form an NMP region. AMP contacts are provided by residues threonine 31, arginine 36, 57-59 (QLV), 85-88 (GFPR), and glutamine 92. Positions 122-159 (GRRAHLPSGRTYHNVYNPPKEEGKDDITGEELVVRDDD) are LID. ATP contacts are provided by residues arginine 123 and 132–133 (TY). Residues arginine 156 and arginine 167 each contribute to the AMP site. An ATP-binding site is contributed by lysine 200.

Belongs to the adenylate kinase family. In terms of assembly, monomer.

Its subcellular location is the cytoplasm. It catalyses the reaction AMP + ATP = 2 ADP. The protein operates within purine metabolism; AMP biosynthesis via salvage pathway; AMP from ADP: step 1/1. In terms of biological role, catalyzes the reversible transfer of the terminal phosphate group between ATP and AMP. Plays an important role in cellular energy homeostasis and in adenine nucleotide metabolism. The protein is Adenylate kinase of Vibrio atlanticus (strain LGP32) (Vibrio splendidus (strain Mel32)).